The following is a 350-amino-acid chain: L-serine dehydratase (350 aa).

Lys62 carries the post-translational modification N6-(pyridoxal phosphate)lysine.

The protein belongs to the serine/threonine dehydratase family. It depends on pyridoxal 5'-phosphate as a cofactor.

It is found in the cytoplasm. It carries out the reaction L-serine = pyruvate + NH4(+). It functions in the pathway carbohydrate biosynthesis; gluconeogenesis. The chain is L-serine dehydratase (sds) from Dictyostelium discoideum (Social amoeba).